A 277-amino-acid polypeptide reads, in one-letter code: Small ribosomal subunit protein uS2 (277 aa).

Residues 247-277 (LSAFESSQDDESDEENREEDLLAKKFDGEAN) are disordered. Positions 253-264 (SQDDESDEENRE) are enriched in acidic residues. The segment covering 265–277 (EDLLAKKFDGEAN) has biased composition (basic and acidic residues).

Belongs to the universal ribosomal protein uS2 family.

This is Small ribosomal subunit protein uS2 (rpsB) from Chlamydia pneumoniae (Chlamydophila pneumoniae).